Here is a 179-residue protein sequence, read N- to C-terminus: Inorganic pyrophosphatase (179 aa).

Lysine 30, arginine 44, and tyrosine 56 together coordinate substrate. Mg(2+) contacts are provided by aspartate 66, aspartate 71, and aspartate 103. Tyrosine 143 contacts substrate.

It belongs to the PPase family. Homohexamer. Requires Mg(2+) as cofactor.

It is found in the cytoplasm. The catalysed reaction is diphosphate + H2O = 2 phosphate + H(+). Functionally, catalyzes the hydrolysis of inorganic pyrophosphate (PPi) forming two phosphate ions. The chain is Inorganic pyrophosphatase from Wigglesworthia glossinidia brevipalpis.